The chain runs to 273 residues: HTH-type transcriptional activator RhaS (273 aa).

Positions 174-272 constitute an HTH araC/xylS-type domain; it reads YQLLDWLQNN…SQSPRDLRSQ (99 aa). 2 consecutive DNA-binding regions (H-T-H motif) follow at residues 191–212 and 239–262; these read PELA…KNKT and VTDI…KREF.

As to quaternary structure, binds DNA as a dimer.

The protein localises to the cytoplasm. Functionally, activates expression of the rhaBAD and rhaT operons. This Yersinia pseudotuberculosis serotype I (strain IP32953) protein is HTH-type transcriptional activator RhaS.